A 143-amino-acid chain; its full sequence is uncharacterized protein (143 aa).

The HTH marR-type domain maps to 5–137 (DARLASDLSL…LRSAADLMLA (133 aa)). The H-T-H motif DNA-binding region spans 51 to 74 (PGALAIRERVRPPSMTRVIASLAD).

In terms of assembly, homodimer.

This is an uncharacterized protein from Mycobacterium bovis (strain ATCC BAA-935 / AF2122/97).